Consider the following 420-residue polypeptide: Gamma-glutamyl phosphate reductase (420 aa).

It belongs to the gamma-glutamyl phosphate reductase family.

It is found in the cytoplasm. It catalyses the reaction L-glutamate 5-semialdehyde + phosphate + NADP(+) = L-glutamyl 5-phosphate + NADPH + H(+). Its pathway is amino-acid biosynthesis; L-proline biosynthesis; L-glutamate 5-semialdehyde from L-glutamate: step 2/2. Its function is as follows. Catalyzes the NADPH-dependent reduction of L-glutamate 5-phosphate into L-glutamate 5-semialdehyde and phosphate. The product spontaneously undergoes cyclization to form 1-pyrroline-5-carboxylate. The sequence is that of Gamma-glutamyl phosphate reductase from Shewanella denitrificans (strain OS217 / ATCC BAA-1090 / DSM 15013).